The primary structure comprises 462 residues: tRNA(Ile)-lysidine synthase (462 aa).

26–31 (SGGVDS) is an ATP binding site.

Belongs to the tRNA(Ile)-lysidine synthase family.

The protein resides in the cytoplasm. The enzyme catalyses cytidine(34) in tRNA(Ile2) + L-lysine + ATP = lysidine(34) in tRNA(Ile2) + AMP + diphosphate + H(+). Ligates lysine onto the cytidine present at position 34 of the AUA codon-specific tRNA(Ile) that contains the anticodon CAU, in an ATP-dependent manner. Cytidine is converted to lysidine, thus changing the amino acid specificity of the tRNA from methionine to isoleucine. This chain is tRNA(Ile)-lysidine synthase, found in Enterococcus faecalis (strain ATCC 700802 / V583).